The primary structure comprises 271 residues: uncharacterized protein (271 aa).

The N-terminal stretch at 1 to 22 (MIHSKRLKLCLCLIILSVFIGA) is a signal peptide. Cys-23 carries the N-palmitoyl cysteine lipid modification. Cys-23 is lipidated: S-diacylglycerol cysteine.

Belongs to the staphylococcal tandem lipoprotein family.

Its subcellular location is the cell membrane. This is an uncharacterized protein from Staphylococcus aureus (strain MW2).